The chain runs to 609 residues: MFS siderochrome iron transporter 1 (609 aa).

Basic and acidic residues-rich tracts occupy residues 1-17 (MSAL…EDNT) and 25-34 (PHEKEIHETP). Residues 1 to 69 (MSALTKIREG…NDSDVPSEDV (69 aa)) form a disordered region. A run of 14 helical transmembrane segments spans residues 81 to 101 (LTWG…LFLI), 125 to 145 (LMTT…IPMA), 154 to 174 (AEGF…MAVS), 182 to 202 (AAQV…GVLA), 220 to 240 (SPYM…VIDV), 245 to 265 (WGFG…FLVL), 300 to 320 (VIGI…FNLA), 329 to 349 (TGYI…FGVW), 368 to 390 (SVVA…NYFF), 407 to 427 (YVNS…GFLI), 432 to 452 (FYKW…GLMI), 469 to 489 (IFIS…VLAA), 496 to 516 (AAAL…GGAI), and 573 to 593 (IRML…VPML).

This sequence belongs to the major facilitator superfamily.

It is found in the cell membrane. Functionally, major facilitator transporter involved in extracellular siderophore uptake. Gibberella zeae produces extracellular coprogen-type siderophores as well as the intracellular siderophore ferricrocin. The role of extracellular siderophores is to supply iron to the fungus during plant infection, and the intracellular ferricrocin is required for intracellular iron distribution and storage with a crucial role in ascus and ascospore development. In Gibberella zeae (strain ATCC MYA-4620 / CBS 123657 / FGSC 9075 / NRRL 31084 / PH-1) (Wheat head blight fungus), this protein is MFS siderochrome iron transporter 1.